The primary structure comprises 179 residues: MSVAKIADAYAEALLELANSNKSLKETTNDMNIVSQFLANSSDLKKFLGNPLITRERKKNVLKDVLGEQISSVSLNFLMLLVNRGRVAFLDKIAQKFLELSYKQDAIEIAKVTSSVALSAQQQKELAGKLKLITGAKKIKLALRVEPKLIGGFTVEIGSKLIDTSIRGQLKKISNLLGA.

This sequence belongs to the ATPase delta chain family. As to quaternary structure, F-type ATPases have 2 components, F(1) - the catalytic core - and F(0) - the membrane proton channel. F(1) has five subunits: alpha(3), beta(3), gamma(1), delta(1), epsilon(1). CF(0) has four main subunits: a(1), b(1), b'(1) and c(10-14). The alpha and beta chains form an alternating ring which encloses part of the gamma chain. F(1) is attached to F(0) by a central stalk formed by the gamma and epsilon chains, while a peripheral stalk is formed by the delta, b and b' chains.

The protein localises to the plastid. Its subcellular location is the chloroplast thylakoid membrane. F(1)F(0) ATP synthase produces ATP from ADP in the presence of a proton or sodium gradient. F-type ATPases consist of two structural domains, F(1) containing the extramembraneous catalytic core and F(0) containing the membrane proton channel, linked together by a central stalk and a peripheral stalk. During catalysis, ATP synthesis in the catalytic domain of F(1) is coupled via a rotary mechanism of the central stalk subunits to proton translocation. Its function is as follows. This protein is part of the stalk that links CF(0) to CF(1). It either transmits conformational changes from CF(0) to CF(1) or is implicated in proton conduction. The sequence is that of ATP synthase subunit delta, chloroplastic from Ochrosphaera neapolitana.